Consider the following 372-residue polypeptide: N-methyl-L-tryptophan oxidase (372 aa).

4-34 (DLIIIGSGSVGAAAGYYATRAGLNVLMTDAH) is a binding site for FAD. C308 carries the S-8alpha-FAD cysteine modification.

This sequence belongs to the MSOX/MTOX family. MTOX subfamily. As to quaternary structure, monomer. It depends on FAD as a cofactor.

The enzyme catalyses N(alpha)-methyl-L-tryptophan + O2 + H2O = L-tryptophan + formaldehyde + H2O2. In terms of biological role, catalyzes the oxidative demethylation of N-methyl-L-tryptophan. The polypeptide is N-methyl-L-tryptophan oxidase (Shigella boydii serotype 18 (strain CDC 3083-94 / BS512)).